The chain runs to 456 residues: MRSSWIKPRLGKDNVTQMNFARNGYITEEMDFVAKKENLPSSLIMEEVARGRLIIPANINHLNLEPMSIGIASRCKVNANIGASPNASDINEEVEKLKLAVKYGADTVMDLSTGGVNLDEVRQAIIQESPVPIGTVPVYQALESVHGSIDRLTEDDFLHIIEKHCQQGVDYQTIHAGLLIEHLPKVKGRITGIVSRGGGILAQWMLHHFKQNPLYTRFDDICEIFKKYDCTFSLGDSLRPGCLHDASDDAQLAELKTLGELTRRAWEHNVQVMVEGPGHVPMDQIEFNVRKQMEECSEAPFYVLGPLVTDISPGYDHISSAIGAAMAGWYGTSMLCYVTPKEHLGLPNAEDVREGLIAYKIAAHAADIARHRAGARDRDDELSHARYNFDWNKQFELSLDPERAKQYHDETLPEEIFKKAEFCSMCGPKHCPMNSKISDESLDQLKDKLEECNTSV.

Residues Asn-80, Met-109, Tyr-139, His-175, 195–197 (SRG), 236–239 (DSLR), and Glu-275 contribute to the substrate site. His-279 contacts Zn(2+). Tyr-302 is a substrate binding site. His-343 is a binding site for Zn(2+). Positions 423, 426, and 431 each coordinate [4Fe-4S] cluster.

The protein belongs to the ThiC family. Requires [4Fe-4S] cluster as cofactor.

The enzyme catalyses 5-amino-1-(5-phospho-beta-D-ribosyl)imidazole + S-adenosyl-L-methionine = 4-amino-2-methyl-5-(phosphooxymethyl)pyrimidine + CO + 5'-deoxyadenosine + formate + L-methionine + 3 H(+). The protein operates within cofactor biosynthesis; thiamine diphosphate biosynthesis. Catalyzes the synthesis of the hydroxymethylpyrimidine phosphate (HMP-P) moiety of thiamine from aminoimidazole ribotide (AIR) in a radical S-adenosyl-L-methionine (SAM)-dependent reaction. In Prochlorococcus marinus (strain AS9601), this protein is Phosphomethylpyrimidine synthase.